A 270-amino-acid chain; its full sequence is Phosphatidate cytidylyltransferase (270 aa).

A run of 7 helical transmembrane segments spans residues 19-39 (LWLTWVGGVGFTLFSIAIGLA), 53-73 (TAFSRLFGWAWLIVTGILLIL), 76-96 (GALLTIGFLVAGCAILLVTQW), 101-121 (GWPAAGLFYAGFSALSLSLLR), 126-146 (FGFTTIVFLFAVVWSTDIAAY), 183-203 (LVASLVAAPGGWGVPVLALLL), and 248-268 (ALLYLFGAIFAEPDVPSAIFF).

Belongs to the CDS family.

Its subcellular location is the cell inner membrane. It catalyses the reaction a 1,2-diacyl-sn-glycero-3-phosphate + CTP + H(+) = a CDP-1,2-diacyl-sn-glycerol + diphosphate. The protein operates within phospholipid metabolism; CDP-diacylglycerol biosynthesis; CDP-diacylglycerol from sn-glycerol 3-phosphate: step 3/3. The protein is Phosphatidate cytidylyltransferase (cdsA) of Brucella melitensis biotype 1 (strain ATCC 23456 / CCUG 17765 / NCTC 10094 / 16M).